Here is a 205-residue protein sequence, read N- to C-terminus: MTKRSEAKYKIDRRMGQNIWGRPKSPVNRREYGPGQHGQRRKGKLSDFGVQLRAKQKLKGYYANISERQFHGIYVEAGRLKGDTGENLIGILERRLDTVVFRAKFVSTMFAARQFINHGHIKVNGRKVNIASYQVKPGDVIEVKEASKQLAIVLEATQLAERDVPDYIEADHSKMTAKFIRIPALSDVPFAVQMEPHLIVEFYSR.

Residues 18-46 (NIWGRPKSPVNRREYGPGQHGQRRKGKLS) are disordered. The 64-residue stretch at 94 to 157 (RRLDTVVFRA…KQLAIVLEAT (64 aa)) folds into the S4 RNA-binding domain.

This sequence belongs to the universal ribosomal protein uS4 family. As to quaternary structure, part of the 30S ribosomal subunit. Contacts protein S5. The interaction surface between S4 and S5 is involved in control of translational fidelity.

One of the primary rRNA binding proteins, it binds directly to 16S rRNA where it nucleates assembly of the body of the 30S subunit. Its function is as follows. With S5 and S12 plays an important role in translational accuracy. The chain is Small ribosomal subunit protein uS4 from Bradyrhizobium sp. (strain BTAi1 / ATCC BAA-1182).